The sequence spans 450 residues: ADP-specific phosphofructokinase (450 aa).

The ADPK domain maps to 1–449 (MIPEHLSIYT…FLTYLEFLKR (449 aa)). 3 residues coordinate Mg(2+): Glu260, Glu290, and Asp433. Asp433 acts as the Proton acceptor in catalysis.

The protein belongs to the carbohydrate kinase PfkC family. Mg(2+) serves as cofactor.

The protein localises to the cytoplasm. It carries out the reaction beta-D-fructose 6-phosphate + ADP = beta-D-fructose 1,6-bisphosphate + AMP + H(+). It participates in carbohydrate degradation; glycolysis. In terms of biological role, catalyzes the phosphorylation of fructose 6-phosphate to fructose 1,6-bisphosphate using ADP as the phosphate donor. In Pyrococcus horikoshii (strain ATCC 700860 / DSM 12428 / JCM 9974 / NBRC 100139 / OT-3), this protein is ADP-specific phosphofructokinase.